Here is a 328-residue protein sequence, read N- to C-terminus: DNA-directed RNA polymerase subunit alpha (328 aa).

The alpha N-terminal domain (alpha-NTD) stretch occupies residues 1–233 (MHNSATEFLK…EQLEAFIDLR (233 aa)). An alpha C-terminal domain (alpha-CTD) region spans residues 247 to 328 (FDPVLLRPVD…WPPVSILKND (82 aa)).

Belongs to the RNA polymerase alpha chain family. As to quaternary structure, homodimer. The RNAP catalytic core consists of 2 alpha, 1 beta, 1 beta' and 1 omega subunit. When a sigma factor is associated with the core the holoenzyme is formed, which can initiate transcription.

The enzyme catalyses RNA(n) + a ribonucleoside 5'-triphosphate = RNA(n+1) + diphosphate. Functionally, DNA-dependent RNA polymerase catalyzes the transcription of DNA into RNA using the four ribonucleoside triphosphates as substrates. The protein is DNA-directed RNA polymerase subunit alpha of Wigglesworthia glossinidia brevipalpis.